A 265-amino-acid polypeptide reads, in one-letter code: Deoxycytidine kinase 1 (265 aa).

30–38 serves as a coordination point for ATP; sequence GNIAAGKST. Substrate is bound by residues Glu55, Tyr88, and Gln99. The active-site Proton acceptor is the Glu129. Positions 130 and 135 each coordinate substrate. 190–194 is an ATP binding site; it reads RVYTR. Glu199 lines the substrate pocket. Residue 242–244 coordinates ATP; it reads EDF.

This sequence belongs to the DCK/DGK family. In terms of assembly, homodimer.

It localises to the nucleus. The catalysed reaction is 2'-deoxycytidine + a ribonucleoside 5'-triphosphate = dCMP + a ribonucleoside 5'-diphosphate + H(+). The enzyme catalyses 2'-deoxyguanosine + ATP = dGMP + ADP + H(+). It carries out the reaction 2'-deoxyadenosine + ATP = dAMP + ADP + H(+). Phosphorylates the deoxyribonucleosides deoxyadenosine, deoxycytidine and deoxyguanosine with highest activity against deoxycytidine followed by deadenosine and deoxyguanosine. Shows only very minor activity against deoxyuridine and deoxythymidine. This is Deoxycytidine kinase 1 from Xenopus laevis (African clawed frog).